A 210-amino-acid polypeptide reads, in one-letter code: tRNA (guanine-N(7)-)-methyltransferase (210 aa).

The S-adenosyl-L-methionine site is built by E36, E61, D90, and D112. D112 is an active-site residue. Residues K116, D148, and 188 to 191 (TEYE) each bind substrate.

This sequence belongs to the class I-like SAM-binding methyltransferase superfamily. TrmB family.

The enzyme catalyses guanosine(46) in tRNA + S-adenosyl-L-methionine = N(7)-methylguanosine(46) in tRNA + S-adenosyl-L-homocysteine. The protein operates within tRNA modification; N(7)-methylguanine-tRNA biosynthesis. Catalyzes the formation of N(7)-methylguanine at position 46 (m7G46) in tRNA. This is tRNA (guanine-N(7)-)-methyltransferase from Mycoplasma pneumoniae (strain ATCC 29342 / M129 / Subtype 1) (Mycoplasmoides pneumoniae).